Here is a 577-residue protein sequence, read N- to C-terminus: MSAATQSPMMQMASGNGASDRDPLPPGWEIKIDPQTGWPFFVDHNSRTTTWNDPRVPPEGPKDTASSANGPSRDGSRLLPIREGHPIYPQLRPGYIPIPVLHEGSENRQPHLFHAYSQPGVQRFRTEAAAATPQRSQSPLRGGMTEAAQTDKQCGQMPATATTAAAQPPTAHGPERSQSPAASDCSSSSSSASLPSSGRSSLGSHQLPRGYIPIPVIHEQNITRPAAQPSFHQAQKTHYPAQQGEYQPQQPVYHKIQGDDWEPRPLRAASPFRSPVRGASSREGSPARSGTPVHCPSPIRVHTVVDRPQPMTHREPPPVTQPENKPESKPGPAGPDLPPGHIPIQVIRREADSKPVSQKSPPPAEKVEVKVSSAPIPCPSPSPAPSAVPSPPKNVAAEQKAAPSPAPAEPAAPKSGEAETPPKHPGVLKVEAILEKVQGLEQAVDSFEGKKTDKKYLMIEEYLTKELLALDSVDPEGRADVRQARRDGVRKVQTILEKLEQKAIDVPGQVQVYELQPSNLEAEQPLQEIMGAVVADKDKKGPENKDPQTESQQLEAKAATPPNPSNPADSAGNLVAP.

The span at 1–17 shows a compositional bias: polar residues; that stretch reads MSAATQSPMMQMASGNG. Disordered regions lie at residues 1–81, 126–207, and 229–427; these read MSAA…LLPI, TEAA…SHQL, and PSFH…HPGV. Serine 2 is subject to N-acetylserine. 2 consecutive WW domains span residues 22–56 and 126–157; these read DPLP…DPRV and TEAA…CGQM. The residue at position 138 (serine 138) is a Phosphoserine. Arginine 141 carries the post-translational modification Omega-N-methylarginine. Positions 158-204 are enriched in low complexity; sequence PATATTAAAQPPTAHGPERSQSPAASDCSSSSSSASLPSSGRSSLGS. Serine 179 and serine 204 each carry phosphoserine. Basic and acidic residues predominate over residues 256–265; it reads IQGDDWEPRP. Omega-N-methylarginine is present on arginine 267. Serine 280, serine 281, and serine 285 each carry phosphoserine. Threonine 291 carries the post-translational modification Phosphothreonine. Serine 297 bears the Phosphoserine mark. Pro residues-rich tracts occupy residues 332 to 341 and 376 to 392; these read PAGPDLPPGH and IPCP…PSPP. Phosphoserine is present on residues serine 380, serine 382, and serine 390. The BAG domain occupies 426-503; the sequence is GVLKVEAILE…TILEKLEQKA (78 aa). Lysine 450 participates in a covalent cross-link: Glycyl lysine isopeptide (Lys-Gly) (interchain with G-Cter in SUMO1); alternate. A Glycyl lysine isopeptide (Lys-Gly) (interchain with G-Cter in SUMO2); alternate cross-link involves residue lysine 450. A disordered region spans residues 524–577; that stretch reads QPLQEIMGAVVADKDKKGPENKDPQTESQQLEAKAATPPNPSNPADSAGNLVAP. Over residues 535–548 the composition is skewed to basic and acidic residues; sequence ADKDKKGPENKDPQ.

Forms a ternary complex with HSPA1A/HSP70 and HSPB8, serving as scaffold subunit. Component of the chaperone-assisted selective autophagy (CASA) complex consisting of BAG3, HSPA8/HSC70, HSPB8 and STUB1/CHIP. Binds to the ATPase domain of HSP70 chaperones. Interacts with BCL2. Interacts with phospholipase C-gamma proteins. Interacts with DNAJB1 and DNAJB6. Interacts (via BAG domain) with HSF1; this interaction occurs in normal and heat-shocked cells. Interacts with HSPA8/HSC70 (via NBD), HSPA1A (via NBD) and HSPA1B (via NBD). Interacts (via WW domain 1) with SYNPO2 (via PPPY motif). Interacts with HSPB8.

It localises to the nucleus. The protein resides in the cytoplasm. In terms of biological role, co-chaperone and adapter protein that connects different classes of molecular chaperones including heat shock proteins 70 (HSP70s), e.g. HSPA1A/HSP70 or HSPA8/HSC70, and small heat shock proteins (sHSPs), e.g. HSPB8. Acts as a nucleotide-exchange factor (NEF) promoting the release of ADP from HSP70s, thereby triggering client protein release. Nucleotide release is mediated via BAG3 binding to the nucleotide-binding domain (NBD) of HSP70s, whereas client release is mediated via its binding to the substrate-binding domain (SBD). Has anti-apoptotic activity. Plays a role in the HSF1 nucleocytoplasmic transport. This Mus musculus (Mouse) protein is BAG family molecular chaperone regulator 3 (Bag3).